The chain runs to 529 residues: Heat shock protein 60 (529 aa).

A disordered region spans residues 460 to 484 (YQATVQHPPPQSSYEEDGRRPPTQP).

The polypeptide is Heat shock protein 60 (Giardia intestinalis (Giardia lamblia)).